The primary structure comprises 294 residues: Glucosamine kinase GspK (294 aa).

Position 12 (Thr-12) interacts with ATP. Asp-101 contacts substrate. Residue Thr-122 coordinates ATP. Residues 139-141 and Asp-146 each bind substrate; that span reads GRE. Gly-202 serves as a coordination point for ATP.

It belongs to the eukaryotic-type N-acetylglucosamine kinase family.

It localises to the cytoplasm. The enzyme catalyses D-glucosamine + ATP = D-glucosamine 6-phosphate + ADP + H(+). Functionally, ATP-dependent kinase, which is specific for glucosamine. Does not show kinase activity with any other sugar. This is Glucosamine kinase GspK (gspK) from Vibrio cholerae serotype O1 (strain ATCC 39315 / El Tor Inaba N16961).